The sequence spans 1338 residues: Centrosomal P4.1-associated protein (1338 aa).

The segment at 190–211 (GLSLLPDDQSQKHRSPGNTTTG) is disordered. A phosphoserine mark is found at Ser-260 and Ser-316. Residues 319-394 (VANIEERPIK…FTNAKSKFQK (76 aa)) are alpha/beta-tubulin binding. Disordered regions lie at residues 386–414 (TNAK…PLFK), 436–479 (PILK…QTGK), and 521–551 (QGKD…ESES). Polar residues predominate over residues 400–409 (LVTNQSTSED). Phosphoserine is present on Ser-540. Basic and acidic residues predominate over residues 541 to 550 (PIRETMKESE). Ser-589 is modified (phosphoserine; by PLK2). Phosphoserine; by PLK2 and PLK4 is present on Ser-595. Disordered stretches follow at residues 611 to 789 (HRMS…LSLS), 845 to 865 (VKRG…TSEL), and 1096 to 1153 (YLPM…QGEI). A compositionally biased stretch (basic and acidic residues) spans 635-650 (NRSEDLDHTAREKESE). The span at 679–689 (QKSTSENQTEW) shows a compositional bias: polar residues. Basic and acidic residues predominate over residues 717-764 (STEDRERGISSREDSPQVCDDKGPFKDTRTQEDKRRDVDLDLSDKDYS). Ser-759 is subject to Phosphoserine. The segment at 895-1338 (QPPGDNARSQ…EGNVLMDTEL (444 aa)) is interaction with STIL. Residues 1140–1149 (YKEEEEDQDI) show a composition bias toward acidic residues.

This sequence belongs to the TCP10 family. As to quaternary structure, forms homodimers. Associates with microtubules plus ends; binds to beta-tubulin subunits exposed on microtubule outer surface at its distal tip; also associates with microtubule lattice. Associated with the gamma-tubulin complex. Interacts with the head domain of EPB41. Interacts with LYST. Interacts with CEP152 (via C-terminus). Interacts with STIL. Forms a complex with STIL and SASS6. Post-translationally, phosphorylation at Ser-589 and Ser-595 by PLK2 is required for procentriole formation and centriole elongation. Phosphorylation by PLK2 oscillates during the cell cycle: it increases at G1/S transition and decreases during the exit from mitosis. Phosphorylation at Ser-595 is also mediated by PLK4 but is not a critical step in PLK4 function in procentriole assembly.

It localises to the cytoplasm. The protein resides in the cytoskeleton. It is found in the microtubule organizing center. The protein localises to the centrosome. Its subcellular location is the centriole. Its function is as follows. Plays an important role in cell division and centrosome function by participating in centriole duplication. Inhibits microtubule nucleation from the centrosome. Involved in the regulation of slow processive growth of centriolar microtubules. Acts as a microtubule plus-end tracking protein that stabilizes centriolar microtubules and inhibits microtubule polymerization and extension from the distal ends of centrioles. Required for centriole elongation and for STIL-mediated centriole amplification. Required for the recruitment of CEP295 to the proximal end of new-born centrioles at the centriolar microtubule wall during early S phase in a PLK4-dependent manner. May be involved in the control of centriolar-microtubule growth by acting as a regulator of tubulin release. This Homo sapiens (Human) protein is Centrosomal P4.1-associated protein.